Consider the following 424-residue polypeptide: Zinc metalloprotease RasP (424 aa).

5 helical membrane-spanning segments follow: residues 5–25 (VAFI…HLIF), 174–194 (FAGP…LGII), 317–337 (LFML…VGIY), 351–371 (FLLW…VPLP), and 396–416 (EGIF…VVTW). His18 provides a ligand contact to Zn(2+). Residue Glu19 is part of the active site. His22 lines the Zn(2+) pocket. The 86-residue stretch at 184–269 (AIAIFLILGI…SQDISVVPGE (86 aa)) folds into the PDZ domain.

It belongs to the peptidase M50B family. Zn(2+) is required as a cofactor.

It localises to the cell membrane. Functionally, is responsible for Site-2 cleavage of the RsiW anti-sigma factor. This results, after a third proteolytic step catalyzed by the ClpXP protease, in the release of SigW and the transcription activation of the genes under the control of the sigma-W factor. The sequence is that of Zinc metalloprotease RasP (rasP) from Oceanobacillus iheyensis (strain DSM 14371 / CIP 107618 / JCM 11309 / KCTC 3954 / HTE831).